Consider the following 517-residue polypeptide: RNA-binding region-containing protein 3 (517 aa).

The tract at residues 1 to 26 (MAAPEQPLAISRGCTSSSSLSPPRGD) is disordered. Position 21 is a phosphoserine (serine 21). An RRM 1 domain is found at 27-102 (RTLLVRHLPA…HTLVVEFAKE (76 aa)). Disordered stretches follow at residues 106–130 (VHSP…DDKE) and 213–254 (MPLH…DEDR). A Phosphoserine modification is found at serine 108. The span at 115–130 (SEKKKRSDDPVEDDKE) shows a compositional bias: basic and acidic residues. Pro residues predominate over residues 217 to 230 (APLPPTSPQPPEEP). The span at 231-252 (PLPEEDEELSSEESEYESTDDE) shows a compositional bias: acidic residues. The RRM 2 domain occupies 420 to 503 (CRIYVKNLAK…KPMVVQFARS (84 aa)).

As to quaternary structure, component of the U11/U12 snRNPs that are part of the U12-type spliceosome. Found in a complex with m(7)G-capped U12 snRNA. Interacts with PDCD7.

It localises to the nucleus. Its function is as follows. Participates in pre-mRNA U12-dependent splicing, performed by the minor spliceosome which removes U12-type introns. U12-type introns comprises less than 1% of all non-coding sequences. Binds to the 3'-stem-loop of m(7)G-capped U12 snRNA. The protein is RNA-binding region-containing protein 3 (RNPC3) of Pongo abelii (Sumatran orangutan).